A 595-amino-acid chain; its full sequence is Thiol:disulfide interchange protein DsbD (595 aa).

The N-terminal stretch at 1–24 is a signal peptide; the sequence is MAQRFITLILLLCSVLLAPHSAQS. Cysteines 134 and 140 form a disulfide. The segment at 166 to 186 is disordered; sequence NSSATVNPPATTQPEGDATPV. 9 consecutive transmembrane segments (helical) span residues 197 to 217, 233 to 253, 270 to 290, 311 to 331, 332 to 352, 353 to 373, 384 to 404, 411 to 431, and 435 to 455; these read ALLIGIGIAFTPCVLPMYPLI, ILILAVVYVQGMALTYTLLGL, YVLIGLSVLFVLLALSMFGLY, GGSLAGVFAMGALAGLICSPC, TTAPLSAILLYIAQSGNMLAG, GGTLYLYALGMGIPLVVVTLF, WMQYVKEAFGFVILALPVFLL, VWGLRLWSLLAVAFFGWAFVL, and AHAGWVRVCQLLLLAALLIVA. C209 and C331 form a disulfide bridge. A Thioredoxin domain is found at 452 to 592; the sequence is LIVARPLQDW…FLQHLQNTPA (141 aa). A disulfide bond links C507 and C510.

This sequence belongs to the thioredoxin family. DsbD subfamily.

It localises to the cell inner membrane. The enzyme catalyses [protein]-dithiol + NAD(+) = [protein]-disulfide + NADH + H(+). The catalysed reaction is [protein]-dithiol + NADP(+) = [protein]-disulfide + NADPH + H(+). Its function is as follows. Required to facilitate the formation of correct disulfide bonds in some periplasmic proteins and for the assembly of the periplasmic c-type cytochromes. Acts by transferring electrons from cytoplasmic thioredoxin to the periplasm. This transfer involves a cascade of disulfide bond formation and reduction steps. This chain is Thiol:disulfide interchange protein DsbD, found in Yersinia pestis bv. Antiqua (strain Nepal516).